The chain runs to 394 residues: Actin-related protein 2 (394 aa).

Residues 160-162 (GDG), 214-218 (RMIKE), and 305-310 (GGSTMY) contribute to the ATP site.

Belongs to the actin family. ARP2 subfamily. As to quaternary structure, component of the Arp2/3 complex composed of ACTR2/ARP2, ACTR3/ARP3, ARPC1B/p41-ARC, ARPC2/p34-ARC, ARPC3/p21-ARC, ARPC4/p20-ARC and ARPC5/p16-ARC.

Its subcellular location is the cytoplasm. It is found in the cytoskeleton. It localises to the cell projection. The protein resides in the nucleus. ATP-binding component of the Arp2/3 complex, a multiprotein complex that mediates actin polymerization upon stimulation by nucleation-promoting factor (NPF). The Arp2/3 complex mediates the formation of branched actin networks in the cytoplasm, providing the force for cell motility. Seems to contact the pointed end of the daughter actin filament. In addition to its role in the cytoplasmic cytoskeleton, the Arp2/3 complex also promotes actin polymerization in the nucleus, thereby regulating gene transcription and repair of damaged DNA. The Arp2/3 complex promotes homologous recombination (HR) repair in response to DNA damage by promoting nuclear actin polymerization, leading to drive motility of double-strand breaks (DSBs). The sequence is that of Actin-related protein 2 (ACTR2) from Gallus gallus (Chicken).